The chain runs to 128 residues: Histone H2A type 1-H (128 aa).

Residues 1–22 (MSGRGKQGGKARAKAKTRSSRA) are disordered. At serine 2 the chain carries N-acetylserine. Serine 2 bears the Phosphoserine; by RPS6KA5 mark. Arginine 4 is modified (citrulline; alternate). Arginine 4 is modified (symmetric dimethylarginine; by PRMT5; alternate). Lysine 6 is modified (N6-(2-hydroxyisobutyryl)lysine). The span at 7–19 (QGGKARAKAKTRS) shows a compositional bias: basic residues. Lysine 10 carries the N6-(2-hydroxyisobutyryl)lysine; alternate modification. 2 positions are modified to N6-(beta-hydroxybutyryl)lysine; alternate: lysine 10 and lysine 14. Residue lysine 10 is modified to N6-lactoyllysine; alternate. Residue lysine 10 is modified to N6-succinyllysine; alternate. Lysine 14 participates in a covalent cross-link: Glycyl lysine isopeptide (Lys-Gly) (interchain with G-Cter in ubiquitin); alternate. Lysine 16 participates in a covalent cross-link: Glycyl lysine isopeptide (Lys-Gly) (interchain with G-Cter in ubiquitin). Lysine 37 is modified (N6-(2-hydroxyisobutyryl)lysine; alternate). Lysine 37 is modified (N6-(beta-hydroxybutyryl)lysine; alternate). Lysine 37 bears the N6-crotonyllysine; alternate mark. Residues lysine 75 and lysine 76 each carry the N6-(2-hydroxyisobutyryl)lysine modification. At lysine 96 the chain carries N6-(2-hydroxyisobutyryl)lysine; alternate. Lysine 96 bears the N6-(beta-hydroxybutyryl)lysine; alternate mark. Lysine 96 carries the post-translational modification N6-succinyllysine; alternate. Lysine 96 bears the N6-glutaryllysine; alternate mark. An N6-glutaryllysine modification is found at lysine 100. Position 105 is an N5-methylglutamine (glutamine 105). Lysine 119 bears the N6-(2-hydroxyisobutyryl)lysine; alternate mark. Lysine 119 carries the post-translational modification N6-(beta-hydroxybutyryl)lysine; alternate. N6-crotonyllysine; alternate occurs at positions 119 and 120. N6-glutaryllysine; alternate is present on residues lysine 119 and lysine 120. Residue lysine 120 forms a Glycyl lysine isopeptide (Lys-Gly) (interchain with G-Cter in ubiquitin); alternate linkage. Threonine 121 carries the phosphothreonine; by DCAF1 modification. An N6-crotonyllysine; alternate modification is found at lysine 126. Position 126 is an N6-glutaryllysine; alternate (lysine 126).

This sequence belongs to the histone H2A family. As to quaternary structure, the nucleosome is a histone octamer containing two molecules each of H2A, H2B, H3 and H4 assembled in one H3-H4 heterotetramer and two H2A-H2B heterodimers. The octamer wraps approximately 147 bp of DNA. Deiminated on Arg-4 in granulocytes upon calcium entry. In terms of processing, monoubiquitination of Lys-120 (H2AK119Ub) by RING1, TRIM37 and RNF2/RING2 complex gives a specific tag for epigenetic transcriptional repression and participates in X chromosome inactivation of female mammals. It is involved in the initiation of both imprinted and random X inactivation. Ubiquitinated H2A is enriched in inactive X chromosome chromatin. Ubiquitination of H2A functions downstream of methylation of 'Lys-27' of histone H3 (H3K27me). H2AK119Ub by RNF2/RING2 can also be induced by ultraviolet and may be involved in DNA repair. Monoubiquitination of Lys-120 (H2AK119Ub) by TRIM37 may promote transformation of cells in a number of breast cancers. Following DNA double-strand breaks (DSBs), it is ubiquitinated through 'Lys-63' linkage of ubiquitin moieties by the E2 ligase UBE2N and the E3 ligases RNF8 and RNF168, leading to the recruitment of repair proteins to sites of DNA damage. Ubiquitination at Lys-14 and Lys-16 (H2AK13Ub and H2AK15Ub, respectively) in response to DNA damage is initiated by RNF168 that mediates monoubiquitination at these 2 sites, and 'Lys-63'-linked ubiquitin are then conjugated to monoubiquitin; RNF8 is able to extend 'Lys-63'-linked ubiquitin chains in vitro. Deubiquitinated by USP51 at Lys-14 and Lys-16 (H2AK13Ub and H2AK15Ub, respectively) after damaged DNA is repaired. H2AK119Ub and ionizing radiation-induced 'Lys-63'-linked ubiquitination (H2AK13Ub and H2AK15Ub) are distinct events. Post-translationally, phosphorylation on Ser-2 (H2AS1ph) is enhanced during mitosis. Phosphorylation on Ser-2 by RPS6KA5/MSK1 directly represses transcription. Acetylation of H3 inhibits Ser-2 phosphorylation by RPS6KA5/MSK1. Phosphorylation at Thr-121 (H2AT120ph) by DCAF1 is present in the regulatory region of many tumor suppresor genes and down-regulates their transcription. Glutamine methylation at Gln-105 (H2AQ104me) by FBL is specifically dedicated to polymerase I. It is present at 35S ribosomal DNA locus and impairs binding of the FACT complex. In terms of processing, symmetric dimethylation on Arg-4 by the PRDM1/PRMT5 complex may play a crucial role in the germ-cell lineage. Post-translationally, crotonylation (Kcr) is specifically present in male germ cells and marks testis-specific genes in post-meiotic cells, including X-linked genes that escape sex chromosome inactivation in haploid cells. Crotonylation marks active promoters and enhancers and confers resistance to transcriptional repressors. It is also associated with post-meiotically activated genes on autosomes. Lactylated in macrophages by EP300/P300 by using lactoyl-CoA directly derived from endogenous or exogenous lactate, leading to stimulates gene transcription.

The protein resides in the nucleus. It localises to the chromosome. Core component of nucleosome. Nucleosomes wrap and compact DNA into chromatin, limiting DNA accessibility to the cellular machineries which require DNA as a template. Histones thereby play a central role in transcription regulation, DNA repair, DNA replication and chromosomal stability. DNA accessibility is regulated via a complex set of post-translational modifications of histones, also called histone code, and nucleosome remodeling. The chain is Histone H2A type 1-H from Homo sapiens (Human).